Reading from the N-terminus, the 373-residue chain is Heterogeneous nuclear ribonucleoprotein A3 homolog 1 (373 aa).

Positions 1-25 are disordered; sequence MPRGGMDDHWPSSDDQGHDPKEPEQ. RRM domains lie at 27–110 and 118–206; these read RKLF…DSAR and KKIF…SAQR. Disordered regions lie at residues 196–218 and 319–373; these read KQEM…FMGR and DFGN…GRRF. The segment covering 207–218 has biased composition (gly residues); it reads GRGGGGSNFMGR. Positions 319 to 333 are enriched in low complexity; that stretch reads DFGNYGGQQQSNYGP. Over residues 334–373 the composition is skewed to gly residues; the sequence is MKGGSFSGRSSGGSGSGPYGGGYGSGGGGGGGGSYGGRRF.

The protein resides in the nucleus. This chain is Heterogeneous nuclear ribonucleoprotein A3 homolog 1, found in Xenopus laevis (African clawed frog).